We begin with the raw amino-acid sequence, 239 residues long: Probable transcriptional regulatory protein lmo0369 (239 aa).

It belongs to the TACO1 family. YeeN subfamily.

It is found in the cytoplasm. The polypeptide is Probable transcriptional regulatory protein lmo0369 (Listeria monocytogenes serovar 1/2a (strain ATCC BAA-679 / EGD-e)).